Consider the following 173-residue polypeptide: Calcium-binding protein 5 (173 aa).

EF-hand domains are found at residues 28–63, 82–99, 105–140, and 142–173; these read DEIE…MGYM, GRVD…KLLA, IGVQ…LLGE, and LTPR…MMSR. Residues D41, D43, D45, and D52 each contribute to the Ca(2+) site. Residues D118, N120, D122, E124, E129, D155, N157, D159, T161, and E166 each coordinate Ca(2+).

Interacts with CACNA1C (via C-terminal CDB motif) in a calcium-dependent manner. Interacts with STXBP1. Interacts with MYO6. As to expression, retina.

It is found in the cytoplasm. Its function is as follows. Inhibits calcium-dependent inactivation of L-type calcium channel and shifts voltage dependence of activation to more depolarized membrane potentials. Involved in the transmission of light signals. May positively regulate neurotransmitter vesicle endocytosis and exocytosis in a salt-dependent manner. May play a role in the extension and network organization of neurites. The sequence is that of Calcium-binding protein 5 (CABP5) from Homo sapiens (Human).